A 521-amino-acid polypeptide reads, in one-letter code: Protein nucleotidyltransferase YdiU (521 aa).

Residues G109, G111, R112, K131, D143, G144, R194, and R201 each coordinate ATP. The active-site Proton acceptor is D270. Mg(2+)-binding residues include N271 and D280. D280 serves as a coordination point for ATP.

It belongs to the SELO family. Mg(2+) is required as a cofactor. Requires Mn(2+) as cofactor.

The enzyme catalyses L-seryl-[protein] + ATP = 3-O-(5'-adenylyl)-L-seryl-[protein] + diphosphate. It carries out the reaction L-threonyl-[protein] + ATP = 3-O-(5'-adenylyl)-L-threonyl-[protein] + diphosphate. It catalyses the reaction L-tyrosyl-[protein] + ATP = O-(5'-adenylyl)-L-tyrosyl-[protein] + diphosphate. The catalysed reaction is L-histidyl-[protein] + UTP = N(tele)-(5'-uridylyl)-L-histidyl-[protein] + diphosphate. The enzyme catalyses L-seryl-[protein] + UTP = O-(5'-uridylyl)-L-seryl-[protein] + diphosphate. It carries out the reaction L-tyrosyl-[protein] + UTP = O-(5'-uridylyl)-L-tyrosyl-[protein] + diphosphate. Nucleotidyltransferase involved in the post-translational modification of proteins. It can catalyze the addition of adenosine monophosphate (AMP) or uridine monophosphate (UMP) to a protein, resulting in modifications known as AMPylation and UMPylation. The polypeptide is Protein nucleotidyltransferase YdiU (Burkholderia pseudomallei (strain 1106a)).